The chain runs to 105 residues: Type VII secretion system extracellular protein D (105 aa).

Forms heterodimers with EsxB.

The protein localises to the secreted. The polypeptide is Type VII secretion system extracellular protein D (Staphylococcus aureus (strain USA300)).